We begin with the raw amino-acid sequence, 156 residues long: Acanthoscurrin-1 (156 aa).

The first 23 residues, 1-23 (MAFRMKLVVCIVLLSTLAVMSSA), serve as a signal peptide directing secretion. Residue Lys155 is modified to Lysine amide.

In terms of tissue distribution, expressed in hemocytes and secreted into the plasma following bacterial immune challenge.

It is found in the secreted. Antimicrobial protein. Strong activity against the Gram-negative bacterium E.coli SBS363 and yeast C.albicans. No detectable activity against the Gram-positive bacterium M.luteus. The protein is Acanthoscurrin-1 of Acanthoscurria gomesiana (Tarantula spider).